A 233-amino-acid polypeptide reads, in one-letter code: Orotidine 5'-phosphate decarboxylase (233 aa).

Residues D11, K34, 61-70 (DLKLHDIPNT), T117, R179, Q188, G208, and R209 each bind substrate. K63 serves as the catalytic Proton donor.

The protein belongs to the OMP decarboxylase family. Type 1 subfamily. In terms of assembly, homodimer.

It catalyses the reaction orotidine 5'-phosphate + H(+) = UMP + CO2. Its pathway is pyrimidine metabolism; UMP biosynthesis via de novo pathway; UMP from orotate: step 2/2. Functionally, catalyzes the decarboxylation of orotidine 5'-monophosphate (OMP) to uridine 5'-monophosphate (UMP). In Streptococcus pneumoniae (strain P1031), this protein is Orotidine 5'-phosphate decarboxylase.